The chain runs to 839 residues: LPS-assembly protein LptD (839 aa).

The first 21 residues, 1-21 (MAIGITACVLSLINYQGLAYS), serve as a signal peptide directing secretion.

The protein belongs to the LptD family. Component of the lipopolysaccharide transport and assembly complex. Interacts with LptE and LptA.

It is found in the cell outer membrane. In terms of biological role, together with LptE, is involved in the assembly of lipopolysaccharide (LPS) at the surface of the outer membrane. In Legionella pneumophila (strain Paris), this protein is LPS-assembly protein LptD.